The sequence spans 85 residues: Dr hemagglutinin AFA-III operon regulatory protein AfaF (85 aa).

It to E.coli PapI and DaaF.

May have a possible regulatory function on the expression of the other AFA-III genes. The chain is Dr hemagglutinin AFA-III operon regulatory protein AfaF (afaF) from Escherichia coli.